Here is a 445-residue protein sequence, read N- to C-terminus: Chromosome partition protein MukF (445 aa).

Positions 213-241 (LSETSATLRELQDTLQAAGDELQTQILDI) are leucine-zipper.

Belongs to the MukF family. In terms of assembly, interacts, and probably forms a ternary complex, with MukE and MukB via its C-terminal region. The complex formation is stimulated by calcium or magnesium. It is required for an interaction between MukE and MukB.

The protein localises to the cytoplasm. It is found in the nucleoid. Functionally, involved in chromosome condensation, segregation and cell cycle progression. May participate in facilitating chromosome segregation by condensation DNA from both sides of a centrally located replisome during cell division. Not required for mini-F plasmid partitioning. Probably acts via its interaction with MukB and MukE. Overexpression results in anucleate cells. It has a calcium binding activity. This is Chromosome partition protein MukF from Vibrio cholerae serotype O1 (strain ATCC 39315 / El Tor Inaba N16961).